A 995-amino-acid chain; its full sequence is DNA polymerase (995 aa).

It belongs to the DNA polymerase type-B family.

The enzyme catalyses DNA(n) + a 2'-deoxyribonucleoside 5'-triphosphate = DNA(n+1) + diphosphate. The protein is DNA polymerase (RF1) of Kluyveromyces lactis (strain ATCC 8585 / CBS 2359 / DSM 70799 / NBRC 1267 / NRRL Y-1140 / WM37) (Yeast).